We begin with the raw amino-acid sequence, 737 residues long: Death domain-associated protein 6 (737 aa).

The interval 1–55 (MATANSIIVLDDDDEDEAAAQPGPSHPPPNPASPQAEAPGSSQPHGAGGSSSSGG) is disordered. A necessary for interaction with USP7 and ATRX region spans residues 1 to 159 (MATANSIIVL…TSSEPSGNNP (159 aa)). At Ser25 the chain carries Phosphoserine. Positions 33–45 (SPQAEAPGSSQPH) are enriched in low complexity. Residue Lys142 forms a Glycyl lysine isopeptide (Lys-Gly) (interchain with G-Cter in SUMO2) linkage. Residues 145 to 184 (LAPAATSSEPSGNNPPTDPSSDPTNAETTASEAPRTRGSR) form a disordered region. A compositionally biased stretch (polar residues) spans 149-175 (ATSSEPSGNNPPTDPSSDPTNAETTAS). The stretch at 179–216 (RTRGSRRQIQRLEQLLALYVAEIRRLQEKELDLSELDD) forms a coiled coil. The tract at residues 182–417 (GSRRQIQRLE…PLKASLDSGE (236 aa)) is interaction with histone H3.3. Position 212 is a phosphoserine (Ser212). The segment at 346-567 (GIDPALSDPA…SPISQLFELE (222 aa)) is necessary for interaction with USP7. The tract at residues 382–556 (QDKSEEGERQ…ENLEELLLEE (175 aa)) is disordered. The Nuclear localization signal motif lies at 390-394 (RQKRR). Phosphoserine occurs at positions 412 and 424. Over residues 422–432 (MASQECPTTSK) the composition is skewed to polar residues. Residues 432–474 (KPETDDEEDEESEEEEEEEEEEEEEEATDSEEEEDLEQMQEGQ) adopt a coiled-coil conformation. The span at 435–489 (TDDEEDEESEEEEEEEEEEEEEEATDSEEEEDLEQMQEGQGDDEEEEEEEEEAGQ) shows a compositional bias: acidic residues. A Phosphothreonine modification is found at Thr459. Ser494 and Ser497 each carry phosphoserine. Position 511 is an N6-acetyllysine (Lys511). Polar residues predominate over residues 517 to 527 (MGEQQNKEFTV). Residues 528 to 547 (SPSSEEPLAPSSIDAESNGE) show a composition bias toward low complexity. Phosphoserine occurs at positions 558 and 578. The tract at residues 569-719 (EALPLDTTPS…QPSRPGTYKM (151 aa)) is disordered. Over residues 579 to 592 (PEERDISSSRKQSE) the composition is skewed to basic and acidic residues. The interaction with SPOP stretch occupies residues 624–737 (CPPCKKSRKE…EEIIVLSDSD (114 aa)). The Nuclear localization signal motif lies at 626–632 (PCKKSRK). Glycyl lysine isopeptide (Lys-Gly) (interchain with G-Cter in SUMO1) cross-links involve residues Lys628 and Lys629. A compositionally biased stretch (basic and acidic residues) spans 647-657 (ERQRSVHEKNG). A phosphoserine mark is found at Ser665, Ser668, Ser685, Ser699, Ser734, and Ser736. Over residues 678-713 (DSSTRVDSPSHGLVTSSLCSASQARLSQTPHSQPSR) the composition is skewed to polar residues. The sumo interaction motif (SIM) stretch occupies residues 730 to 737 (IIVLSDSD).

The protein belongs to the DAXX family. Homomultimer. Interacts (via C-terminus) with TNFRSF6 (via death domain). Interacts with PAX5, SLC2A4/GLUT4, MAP3K5, TGFBR2, phosphorylated dimeric HSPB1/HSP27, CENPC, ETS1, sumoylated PML, UBE2I, MCRS1 and TP53. Interacts (via N-terminus) with HIPK2 and HIPK3. Interacts with HIPK1, which induces translocation from PML/POD/ND10 nuclear bodies to chromatin and enhances association with HDAC1. Interacts (non-phosphorylated) with PAX3, PAX7, DEK, HDAC1, HDAC2, HDAC3, acetylated histone H4 and histones H2A, H2B, H3, H3.3 and H4. Interacts with SPOP; mediating CUL3-dependent proteasomal degradation. Interacts with CBP; the interaction is dependent the sumoylation of CBP and suppresses CBP transcriptional activity via recruitment of HDAC2 directly in the complex with TP53 and HIPK2. Interacts with AXIN1; the interaction stimulates the interaction of DAXX with TP53, stimulates 'Ser-46' phosphorylation of TP53 on and induces cell death on UV irradiation. Interacts with MDM2; the interaction is direct. Interacts with USP7; the interaction is direct and independent of MDM2 and TP53. Part of a complex with DAXX, MDM2 and USP7 under non-stress conditions. Interacts (via N-terminus) with RASSF1 (via C-terminus); the interaction is independent of MDM2 and TP53; RASSF1 isoform A disrupts interactions among MDM2, DAXX and USP7, thus contributing to the efficient activation of TP53 by promoting MDM2 self-ubiquitination in cell-cycle checkpoint control in response to DNA damage. Interacts with ATRX to form the chromatin remodeling complex ATRX:DAXX. Interacts with HSF1 (via homotrimeric form preferentially); this interaction relieves homotrimeric HSF1 from repression of its transcriptional activity by HSP90-dependent multichaperone complex upon heat shock. Sumoylated with SUMO1 on multiple lysine residues. Post-translationally, polyubiquitinated; which is promoted by CUL3 and SPOP and results in proteasomal degradation. Ubiquitinated by MDM2; inducing its degradation. Deubiquitinated by USP7; leading to stabilize it.

Its subcellular location is the cytoplasm. It is found in the nucleus. The protein resides in the nucleoplasm. The protein localises to the PML body. It localises to the nucleolus. Its subcellular location is the chromosome. It is found in the centromere. In terms of biological role, transcription corepressor known to repress transcriptional potential of several sumoylated transcription factors. Down-regulates basal and activated transcription. Its transcription repressor activity is modulated by recruiting it to subnuclear compartments like the nucleolus or PML/POD/ND10 nuclear bodies through interactions with MCSR1 and PML, respectively. Seems to regulate transcription in PML/POD/ND10 nuclear bodies together with PML and may influence TNFRSF6-dependent apoptosis thereby. Inhibits transcriptional activation of PAX3 and ETS1 through direct protein-protein interactions. Modulates PAX5 activity; the function seems to involve CREBBP. Acts as an adapter protein in a MDM2-DAXX-USP7 complex by regulating the RING-finger E3 ligase MDM2 ubiquitination activity. Under non-stress condition, in association with the deubiquitinating USP7, prevents MDM2 self-ubiquitination and enhances the intrinsic E3 ligase activity of MDM2 towards TP53, thereby promoting TP53 ubiquitination and subsequent proteasomal degradation. Upon DNA damage, its association with MDM2 and USP7 is disrupted, resulting in increased MDM2 autoubiquitination and consequently, MDM2 degradation, which leads to TP53 stabilization. Acts as a histone chaperone that facilitates deposition of histone H3.3. Acts as a targeting component of the chromatin remodeling complex ATRX:DAXX which has ATP-dependent DNA translocase activity and catalyzes the replication-independent deposition of histone H3.3 in pericentric DNA repeats outside S-phase and telomeres, and the in vitro remodeling of H3.3-containing nucleosomes. Does not affect the ATPase activity of ATRX but alleviates its transcription repression activity. Upon neuronal activation associates with regulatory elements of selected immediate early genes where it promotes deposition of histone H3.3 which may be linked to transcriptional induction of these genes. Required for the recruitment of histone H3.3:H4 dimers to PML-nuclear bodies (PML-NBs); the process is independent of ATRX and facilitated by ASF1A; PML-NBs are suggested to function as regulatory sites for the incorporation of newly synthesized histone H3.3 into chromatin. Proposed to mediate activation of the JNK pathway and apoptosis via MAP3K5 in response to signaling from TNFRSF6 and TGFBR2. Interaction with HSPB1/HSP27 may prevent interaction with TNFRSF6 and MAP3K5 and block DAXX-mediated apoptosis. In contrast, in lymphoid cells JNC activation and TNFRSF6-mediated apoptosis may not involve DAXX. Plays a role as a positive regulator of the heat shock transcription factor HSF1 activity during the stress protein response. In Canis lupus familiaris (Dog), this protein is Death domain-associated protein 6 (DAXX).